The chain runs to 648 residues: Exoribonuclease 2 (648 aa).

One can recognise an RNB domain in the interval 191-518 (RIDLTYLDFI…INHRLIKSII (328 aa)). In terms of domain architecture, S1 motif spans 565–647 (KKKYQANIID…GNKKIIATMI (83 aa)).

Belongs to the RNR ribonuclease family. RNase II subfamily.

It is found in the cytoplasm. It carries out the reaction Exonucleolytic cleavage in the 3'- to 5'-direction to yield nucleoside 5'-phosphates.. Functionally, involved in mRNA degradation. Hydrolyzes single-stranded polyribonucleotides processively in the 3' to 5' direction. The sequence is that of Exoribonuclease 2 from Buchnera aphidicola subsp. Cinara cedri (strain Cc).